We begin with the raw amino-acid sequence, 212 residues long: Large ribosomal subunit protein uL1 (212 aa).

This sequence belongs to the universal ribosomal protein uL1 family. As to quaternary structure, part of the 50S ribosomal subunit.

Its function is as follows. Binds directly to 23S rRNA. Probably involved in E site tRNA release. Functionally, protein L1 is also a translational repressor protein, it controls the translation of its operon by binding to its mRNA. This is Large ribosomal subunit protein uL1 from Methanothermobacter thermautotrophicus (strain ATCC 29096 / DSM 1053 / JCM 10044 / NBRC 100330 / Delta H) (Methanobacterium thermoautotrophicum).